Consider the following 320-residue polypeptide: 7-acetyl-epi-neemfruitin B aldo-keto reductase (320 aa).

Asp-51 lines the NADP(+) pocket. Catalysis depends on Tyr-56, which acts as the Proton donor. Residues Gln-186 and Phe-264–Asn-272 each bind NADP(+).

It belongs to the aldo/keto reductase family. As to expression, mainly expressed in petioles and, to a lower extent, in roots.

The catalysed reaction is 7-acetyl-epi-neemfruitin B + AH2 + H2O = (1S,3bR,4R,5aR,9aR,9bR,11aS)-1-[(4R)-5-[(2S)-3,3-dimethyloxiran-2-yl]-1,4-dihydroxybutan-2-yl]-3b,6,6,9a,11a-pentamethyl-7-oxo-1H,2H,3bH,4H,5H,5aH,6H,7H,9aH,9bH,10H,11H,11aH-cyclopenta[a]phenanthren-4-yl acetate + acetate + A + H(+). It participates in secondary metabolite biosynthesis; terpenoid biosynthesis. Functionally, aldo-keto reductase involved in the biosynthesis of limonoids triterpene natural products such as azadirachtin, an antifeedant widely used as bioinsecticide, and possessing many medicinal applications including anti-tumoral, anti-malarial, anti-rheumatic, antibacterial, anti-inflammatory, anti-pyretic and diuretic effects. Can use 7-acetyl-epi-neemfruitin B as substrate. The protein is 7-acetyl-epi-neemfruitin B aldo-keto reductase of Melia azedarach (Chinaberry tree).